The following is a 607-amino-acid chain: Zinc finger CCCH domain-containing protein 66 (607 aa).

2 ANK repeats span residues 57-87 (EERT…DVNR) and 92-124 (DGAT…NPDS). Acidic residues predominate over residues 161-178 (LNEVNGQEESEPEVEVEV). The disordered stretch occupies residues 161 to 193 (LNEVNGQEESEPEVEVEVEVSPPRGSERKEYPV). 2 C3H1-type zinc fingers span residues 254 to 276 (PCPE…HGIF) and 284 to 308 (QYRT…HKPE). The disordered stretch occupies residues 342-363 (ISPLPIGATTTPPLSPNGVSSP). Residues 349–361 (ATTTPPLSPNGVS) show a composition bias toward polar residues.

The protein is Zinc finger CCCH domain-containing protein 66 of Arabidopsis thaliana (Mouse-ear cress).